The primary structure comprises 893 residues: DNA mismatch repair protein MutS (893 aa).

631-638 (GPNMAGKS) is an ATP binding site. The segment at 821–858 (AGRPRVAVRQPQGGRRGASTGQLGLFGMEPAQGGTGVT) is disordered.

Belongs to the DNA mismatch repair MutS family.

Functionally, this protein is involved in the repair of mismatches in DNA. It is possible that it carries out the mismatch recognition step. This protein has a weak ATPase activity. The sequence is that of DNA mismatch repair protein MutS from Myxococcus xanthus (strain DK1622).